Consider the following 272-residue polypeptide: Dermonecrotic toxin LvSicTox-alphaIC1bi (272 aa).

The active site involves histidine 5. Mg(2+) contacts are provided by glutamate 25 and aspartate 27. The active-site Nucleophile is histidine 41. 2 disulfide bridges follow: cysteine 45–cysteine 51 and cysteine 47–cysteine 189. Position 84 (aspartate 84) interacts with Mg(2+).

This sequence belongs to the arthropod phospholipase D family. Class II subfamily. The cofactor is Mg(2+). Expressed by the venom gland.

Its subcellular location is the secreted. It catalyses the reaction an N-(acyl)-sphingosylphosphocholine = an N-(acyl)-sphingosyl-1,3-cyclic phosphate + choline. The catalysed reaction is an N-(acyl)-sphingosylphosphoethanolamine = an N-(acyl)-sphingosyl-1,3-cyclic phosphate + ethanolamine. The enzyme catalyses a 1-acyl-sn-glycero-3-phosphocholine = a 1-acyl-sn-glycero-2,3-cyclic phosphate + choline. It carries out the reaction a 1-acyl-sn-glycero-3-phosphoethanolamine = a 1-acyl-sn-glycero-2,3-cyclic phosphate + ethanolamine. Dermonecrotic toxins cleave the phosphodiester linkage between the phosphate and headgroup of certain phospholipids (sphingolipid and lysolipid substrates), forming an alcohol (often choline) and a cyclic phosphate. This toxin acts on sphingomyelin (SM). It may also act on ceramide phosphoethanolamine (CPE), lysophosphatidylcholine (LPC) and lysophosphatidylethanolamine (LPE), but not on lysophosphatidylserine (LPS), and lysophosphatidylglycerol (LPG). It acts by transphosphatidylation, releasing exclusively cyclic phosphate products as second products. Induces dermonecrosis, hemolysis, increased vascular permeability, edema, inflammatory response, and platelet aggregation. The protein is Dermonecrotic toxin LvSicTox-alphaIC1bi of Loxosceles variegata (Recluse spider).